Consider the following 314-residue polypeptide: NAD-dependent protein lipoamidase sirtuin-4, mitochondrial (314 aa).

The transit peptide at 1–28 (MKMSFALTFRSAKGRWIANPSQPCSKAS) directs the protein to the mitochondrion. In terms of domain architecture, Deacetylase sirtuin-type spans 37 to 314 (PPLDPEKVKE…GELLPLIDPC (278 aa)). Residues 62 to 82 (GAGI…VGLY) and 143 to 146 (QNVD) contribute to the NAD(+) site. Residue His161 is the Proton acceptor of the active site. Zn(2+)-binding residues include Cys169, Cys172, Cys220, and Cys223. NAD(+)-binding positions include 260-262 (GSS), 286-288 (NIG), and Cys304.

It belongs to the sirtuin family. Class II subfamily. In terms of assembly, interacts with GLUD1, IDE and SLC25A5. Interacts with DLAT and PDHX. Interacts with MCCC1 (via the biotin carboxylation domain). Interacts with PCCA and PC. Zn(2+) is required as a cofactor. Detected in vascular smooth muscle and striated muscle. Detected in insulin-producing beta-cells in pancreas islets of Langerhans (at protein level). Widely expressed. Weakly expressed in leukocytes and fetal thymus.

The protein resides in the mitochondrion matrix. The enzyme catalyses N(6)-[(R)-lipoyl]-L-lysyl-[protein] + NAD(+) + H2O = 2''-O-lipoyl-ADP-D-ribose + nicotinamide + L-lysyl-[protein]. The catalysed reaction is N(6)-biotinyl-L-lysyl-[protein] + NAD(+) + H2O = 2''-O-biotinyl-ADP-D-ribose + nicotinamide + L-lysyl-[protein]. It carries out the reaction N(6)-acetyl-L-lysyl-[protein] + NAD(+) + H2O = 2''-O-acetyl-ADP-D-ribose + nicotinamide + L-lysyl-[protein]. It catalyses the reaction L-cysteinyl-[protein] + NAD(+) = S-(ADP-D-ribosyl)-L-cysteinyl-[protein] + nicotinamide + H(+). In terms of biological role, acts as a NAD-dependent protein lipoamidase, biotinylase, deacetylase and ADP-ribosyl transferase. Catalyzes more efficiently removal of lipoyl- and biotinyl- than acetyl-lysine modifications. Inhibits the pyruvate dehydrogenase complex (PDH) activity via the enzymatic hydrolysis of the lipoamide cofactor from the E2 component, DLAT, in a phosphorylation-independent manner. Catalyzes the transfer of ADP-ribosyl groups onto target proteins, including mitochondrial GLUD1, inhibiting GLUD1 enzyme activity. Acts as a negative regulator of mitochondrial glutamine metabolism by mediating mono ADP-ribosylation of GLUD1: expressed in response to DNA damage and negatively regulates anaplerosis by inhibiting GLUD1, leading to block metabolism of glutamine into tricarboxylic acid cycle and promoting cell cycle arrest. In response to mTORC1 signal, SIRT4 expression is repressed, promoting anaplerosis and cell proliferation. Acts as a tumor suppressor. Also acts as a NAD-dependent protein deacetylase: mediates deacetylation of 'Lys-471' of MLYCD, inhibiting its activity, thereby acting as a regulator of lipid homeostasis. Does not seem to deacetylate PC. Controls fatty acid oxidation by inhibiting PPARA transcriptional activation. Impairs SIRT1-PPARA interaction probably through the regulation of NAD(+) levels. Down-regulates insulin secretion. In Homo sapiens (Human), this protein is NAD-dependent protein lipoamidase sirtuin-4, mitochondrial.